The chain runs to 338 residues: Fructose-1,6-bisphosphatase class 1 (338 aa).

4 residues coordinate Mg(2+): Glu-92, Asp-114, Leu-116, and Asp-117. Substrate is bound by residues 117–120, Asn-210, Tyr-243, and Lys-276; that span reads DGSS. Glu-282 contributes to the Mg(2+) binding site.

Belongs to the FBPase class 1 family. As to quaternary structure, homotetramer. It depends on Mg(2+) as a cofactor.

Its subcellular location is the cytoplasm. It catalyses the reaction beta-D-fructose 1,6-bisphosphate + H2O = beta-D-fructose 6-phosphate + phosphate. Its pathway is carbohydrate biosynthesis; gluconeogenesis. The chain is Fructose-1,6-bisphosphatase class 1 from Maridesulfovibrio salexigens (strain ATCC 14822 / DSM 2638 / NCIMB 8403 / VKM B-1763) (Desulfovibrio salexigens).